Here is a 263-residue protein sequence, read N- to C-terminus: Thiamine thiazole synthase (263 aa).

NAD(+) contacts are provided by residues Ser36, 55-56 (ER), Gly63, Val127, and 157-159 (HVD). Fe cation contacts are provided by Asp159 and His174. Met228 is a binding site for NAD(+). Residue Arg238 coordinates glycine.

It belongs to the THI4 family. Homooctamer; tetramer of dimers. The cofactor is Fe(2+).

It carries out the reaction hydrogen sulfide + glycine + NAD(+) = ADP-5-ethyl-4-methylthiazole-2-carboxylate + nicotinamide + 3 H2O + H(+). The protein operates within cofactor biosynthesis; thiamine diphosphate biosynthesis. In terms of biological role, involved in the biosynthesis of the thiazole moiety of thiamine. Catalyzes the conversion of NAD and glycine to adenosine diphosphate 5-(2-hydroxyethyl)-4-methylthiazole-2-carboxylate (ADT), an adenylated thiazole intermediate, using free sulfide as a source of sulfur. This chain is Thiamine thiazole synthase, found in Solidesulfovibrio magneticus (strain ATCC 700980 / DSM 13731 / RS-1) (Desulfovibrio magneticus).